The primary structure comprises 309 residues: NAD kinase (309 aa).

Asp89 acts as the Proton acceptor in catalysis. NAD(+)-binding positions include 89–90 (DG), 163–164 (NE), His174, Arg191, Asp193, and 204–209 (TAYSLS).

This sequence belongs to the NAD kinase family. Requires a divalent metal cation as cofactor.

It is found in the cytoplasm. It carries out the reaction NAD(+) + ATP = ADP + NADP(+) + H(+). Involved in the regulation of the intracellular balance of NAD and NADP, and is a key enzyme in the biosynthesis of NADP. Catalyzes specifically the phosphorylation on 2'-hydroxyl of the adenosine moiety of NAD to yield NADP. This is NAD kinase from Shewanella frigidimarina (strain NCIMB 400).